We begin with the raw amino-acid sequence, 769 residues long: Serine/threonine-protein kinase PLK4 (769 aa).

The Protein kinase domain occupies 14–267; it reads YEVQHLLGKG…LEAVLCHPFM (254 aa). Residues 20–28 and K43 each bind ATP; that span reads LGKGGFATV. D138 functions as the Proton acceptor in the catalytic mechanism. Residues 381–498 enclose the Cryptic POLO box 1 (CPB1) domain; it reads EDRISVPPLN…ARFVGLVKSK (118 aa). Residues 499 to 602 enclose the Cryptic POLO box 2 (CPB2) domain; sequence TPKVTYFSTL…GRRPITDVQP (104 aa). In terms of domain architecture, POLO box spans 660–739; sequence PIKRINVPEI…IPNIQLKLKT (80 aa).

Belongs to the protein kinase superfamily. Ser/Thr protein kinase family. CDC5/Polo subfamily. Homodimer. Interacts with Alms1a. Ubiquitinated by the SCF-slmb ubiquitin ligase complex; leading to its degradation by the proteasome during interphase and regulating centriole number and ensuring the block to centriole reduplication. In terms of tissue distribution, expressed in testis (at protein level).

The protein resides in the cytoplasm. Its subcellular location is the cytoskeleton. It localises to the microtubule organizing center. It is found in the centrosome. The protein localises to the centriole. The catalysed reaction is L-seryl-[protein] + ATP = O-phospho-L-seryl-[protein] + ADP + H(+). The enzyme catalyses L-threonyl-[protein] + ATP = O-phospho-L-threonyl-[protein] + ADP + H(+). Its function is as follows. Serine/threonine-protein kinase that plays a central role in centriole duplication. Able to trigger procentriole formation on the surface of the mother centriole cylinder, using mother centriole as a platform, leading to the recruitment of centriole biogenesis proteins such as Sas-6. When overexpressed, it is able to induce centrosome amplification through the simultaneous generation of multiple procentrioles adjoining each parental centriole during S phase. Centrosome amplification following overexpression can initiate tumorigenesis, highlighting the importance of centrosome regulation in cancers. The sequence is that of Serine/threonine-protein kinase PLK4 (SAK) from Drosophila melanogaster (Fruit fly).